The following is a 194-amino-acid chain: Phosphoheptose isomerase (194 aa).

The 158-residue stretch at 37-194 folds into the SIS domain; it reads ISNSFKQGGK…LIEFEMAKQA (158 aa). 52-54 contacts substrate; the sequence is NGG. The Zn(2+) site is built by His61 and Glu65. Substrate is bound by residues Glu65, 93–94, 119–121, Ser124, and Gln172; these read ND and STS. The Zn(2+) site is built by Gln172 and His180.

Belongs to the SIS family. GmhA subfamily. In terms of assembly, homotetramer. Zn(2+) serves as cofactor.

It is found in the cytoplasm. The enzyme catalyses 2 D-sedoheptulose 7-phosphate = D-glycero-alpha-D-manno-heptose 7-phosphate + D-glycero-beta-D-manno-heptose 7-phosphate. It participates in carbohydrate biosynthesis; D-glycero-D-manno-heptose 7-phosphate biosynthesis; D-glycero-alpha-D-manno-heptose 7-phosphate and D-glycero-beta-D-manno-heptose 7-phosphate from sedoheptulose 7-phosphate: step 1/1. In terms of biological role, catalyzes the isomerization of sedoheptulose 7-phosphate in D-glycero-D-manno-heptose 7-phosphate. This is Phosphoheptose isomerase from Actinobacillus pleuropneumoniae serotype 5b (strain L20).